The following is a 174-amino-acid chain: MNYFELFSLLPSYDVDTALLADRYRELQRAVHPDKFANASEQDKRLSVQRTAQINDAFQTLKNPIQRAEHLLALKGLELSHESTTLKDTQFLMQQMDWRESLEEIKHSDDPDSEIAELYDSFEQYAKHITAELKLLLVSELEADHLQAADQIRKLKFMAKLQDELTRVEDALLD.

In terms of domain architecture, J spans 2-74; that stretch reads NYFELFSLLP…IQRAEHLLAL (73 aa).

Belongs to the HscB family. Interacts with HscA and stimulates its ATPase activity.

In terms of biological role, co-chaperone involved in the maturation of iron-sulfur cluster-containing proteins. Seems to help targeting proteins to be folded toward HscA. The chain is Co-chaperone protein HscB homolog from Shewanella pealeana (strain ATCC 700345 / ANG-SQ1).